The primary structure comprises 89 residues: MALSTAEKKQILAEYGLHDSDTGSAEAQVALLTKRIIGLTEHLKQHKHDHHSRRGLLLMVGRRRRLLNYLTKVDIERYRSLIQRLGLRR.

The protein belongs to the universal ribosomal protein uS15 family. In terms of assembly, part of the 30S ribosomal subunit. Forms a bridge to the 50S subunit in the 70S ribosome, contacting the 23S rRNA.

One of the primary rRNA binding proteins, it binds directly to 16S rRNA where it helps nucleate assembly of the platform of the 30S subunit by binding and bridging several RNA helices of the 16S rRNA. Its function is as follows. Forms an intersubunit bridge (bridge B4) with the 23S rRNA of the 50S subunit in the ribosome. The protein is Small ribosomal subunit protein uS15 of Saccharopolyspora erythraea (strain ATCC 11635 / DSM 40517 / JCM 4748 / NBRC 13426 / NCIMB 8594 / NRRL 2338).